Here is a 134-residue protein sequence, read N- to C-terminus: MSWQAYVDDHLMCDIEGHEDHRLTAAAIVGHDGSVWAQSATFPQFKPEEMNGIMTDFNEPGHLAPTGLHLGGTKYMVIQGEAGAVIRGKKGSGGITIKKTGQALVFGIYEEPVTPGQCNMVVEGLGDYLLEQGL.

Cysteines 13 and 118 form a disulfide. The short motif at 84-100 (AVIRGKKGSGGITIKKT) is the Involved in PIP2 interaction element. Residue Thr-114 is modified to Phosphothreonine.

Belongs to the profilin family. Occurs in many kinds of cells as a complex with monomeric actin in a 1:1 ratio. Post-translationally, phosphorylated by MAP kinases.

It is found in the cytoplasm. Its subcellular location is the cytoskeleton. Its function is as follows. Binds to actin and affects the structure of the cytoskeleton. At high concentrations, profilin prevents the polymerization of actin, whereas it enhances it at low concentrations. This is Profilin-4 from Olea europaea (Common olive).